Consider the following 200-residue polypeptide: Alpha/beta-tubulin-N-acetyltransferase 9 (200 aa).

An N-acetyltransferase domain is found at 34–181 (ETLRELTASE…HEVTLERPIT (148 aa)).

It belongs to the acetyltransferase family. GNAT subfamily. In terms of assembly, interacts with microtubules as well as alpha/beta-tubulin heterodimers.

It is found in the nucleus. It localises to the cytoplasm. Its subcellular location is the cytoskeleton. The protein localises to the spindle. The protein resides in the spindle pole. It catalyses the reaction N-terminal L-methionyl-[tubulin] + acetyl-CoA = N-terminal N(alpha)-acetyl-L-methionyl-[tubulin] + CoA + H(+). N-acetyltransferase that mediates the acetylation of the N-terminal residues of alpha- and beta-tubulin. Required for microtubule stability and inhibition of JNK signaling to promote cell survival during development, possibly acting independently of its N-acetyltransferase activity. Necessary for the stabilization of spindle microtubules and for mitosis progression. Regulates microtubule stability by inhibiting Spastin-mediated depolymerization and promoting Eb1-mediated polymerization. This is Alpha/beta-tubulin-N-acetyltransferase 9 from Drosophila melanogaster (Fruit fly).